The chain runs to 130 residues: Protein ApaG (130 aa).

In terms of domain architecture, ApaG spans 3–127 (RAITRNIQVT…FSLDVPDVRR (125 aa)).

This Xanthobacter autotrophicus (strain ATCC BAA-1158 / Py2) protein is Protein ApaG.